Reading from the N-terminus, the 244-residue chain is Triosephosphate isomerase (244 aa).

9–11 contributes to the substrate binding site; it reads NWK. Residue His93 is the Electrophile of the active site. Catalysis depends on Glu160, which acts as the Proton acceptor. The substrate site is built by Gly166 and Ser206.

The protein belongs to the triosephosphate isomerase family. As to quaternary structure, homodimer.

Its subcellular location is the cytoplasm. The enzyme catalyses D-glyceraldehyde 3-phosphate = dihydroxyacetone phosphate. It participates in carbohydrate biosynthesis; gluconeogenesis. The protein operates within carbohydrate degradation; glycolysis; D-glyceraldehyde 3-phosphate from glycerone phosphate: step 1/1. Its function is as follows. Involved in the gluconeogenesis. Catalyzes stereospecifically the conversion of dihydroxyacetone phosphate (DHAP) to D-glyceraldehyde-3-phosphate (G3P). The chain is Triosephosphate isomerase from Mycoplasma genitalium (strain ATCC 33530 / DSM 19775 / NCTC 10195 / G37) (Mycoplasmoides genitalium).